Here is a 687-residue protein sequence, read N- to C-terminus: MCASLNEVKKNDTYGVSQKGYNDNFSESEGVLHGSKSMPTSMKNMLQSPTMVNMCDILQNKEAANDEKPVIPTTDTATAGTGTEDISSTQSEETDQNSHLIASEILEGTFKDVSYKEYANFLGNDNNNQVLTEFVKLLSPLPSSLLETLFNLSKSIYFIAEAQNIDRILECLSIEWIACHPNTHWKSGYKSCHIVLFSLLILNSDLHNNFQVDHKKIKFSMVAFINNTLRALREENEYEELKIYSREHLIIEELSEYYKTLNETPLPLCTESRTSINISDNQSSLKRFSTLGSREFSTSNLRSVNSNSTTLYSRDGQVSVREMSAKSNKNFHNNHPMDALYLKESFDDGLITENGSSWFMDDLILISKKSLPRKYSKRDKDQVAAPKMTSKRNKSFFGWLKPSKTTTLIEHTSRRTSLSYLNKDSEWERVKIQVKEGRIFIFKIKPDVKDIIQSSETDSATIDYFKDISSSYFAYSLLEAEAHVVQDNIIIGSGAMKSNVCNKNTKRKSGNFTVSFPENINGPKLVLEFQTRSVEEAHKFMDCINFWAGRISPVPLTQFEAVSNAEYGWSDKILTEHASLNLKNIVVSEWKPLLGLELLYEDAKDVEMVELKERLKELMNFTRQLGIWIDKHNEIKDKLVEIWSFDDNYFEAVMNNWNSRYLYMNNQYKKRLSYLKALQKAMGSVQF.

A compositionally biased stretch (polar residues) spans 14–27 (YGVSQKGYNDNFSE). 2 disordered regions span residues 14–35 (YGVS…LHGS) and 63–97 (AAND…TDQN). One can recognise an SEC7 domain in the interval 57–264 (ILQNKEAAND…SEYYKTLNET (208 aa)). Positions 73 to 83 (TTDTATAGTGT) are enriched in low complexity. Threonine 290 carries the phosphothreonine modification. A phosphoserine mark is found at serine 293 and serine 299. Residues 412-551 (TSRRTSLSYL…DCINFWAGRI (140 aa)) form the PH domain.

It belongs to the YEL1 family.

It is found in the cytoplasm. Its subcellular location is the cell membrane. It localises to the bud neck. The protein localises to the bud tip. Its function is as follows. Guanine nucleotide exchange factor for ARF3 required for localization of ARF3 to the bud neck and tip and involved in actin patch polarization. The chain is Guanine-nucleotide exchange factor YEL1 (YEL1) from Saccharomyces cerevisiae (strain YJM789) (Baker's yeast).